The primary structure comprises 291 residues: MITVRAPATSANLGSGFDVFGAALERPADILRIEKANRTTIRVTGVGSKYIPEDPEKNTVGAVAEALDAPAHIEIDKGVRPASGLGSSAASAAAAAVGLNELYDRGLSREELVPIAAEGEAVVSGAAHADNVAPSIMGGFTVAREDGVTQVDASIPLVACLPEIVVSTRDARGVVPEAAPMEAVVDVVGNAATLAVGMARDDPALVGRGMEDSIVTPERAELINGYETVRSAAENAGATGVTISGAGPTVIAACHRGDRTAIASAMLDAFSEAGVEARAYKTEIGRGAELF.

80–90 is an ATP binding site; the sequence is RPASGLGSSAA.

This sequence belongs to the GHMP kinase family. Homoserine kinase subfamily.

The protein resides in the cytoplasm. The catalysed reaction is L-homoserine + ATP = O-phospho-L-homoserine + ADP + H(+). The protein operates within amino-acid biosynthesis; L-threonine biosynthesis; L-threonine from L-aspartate: step 4/5. Catalyzes the ATP-dependent phosphorylation of L-homoserine to L-homoserine phosphate. This chain is Homoserine kinase, found in Natronomonas pharaonis (strain ATCC 35678 / DSM 2160 / CIP 103997 / JCM 8858 / NBRC 14720 / NCIMB 2260 / Gabara) (Halobacterium pharaonis).